The following is a 547-amino-acid chain: ATP synthase subunit alpha (547 aa).

172–179 (GDRKTGKT) serves as a coordination point for ATP.

Belongs to the ATPase alpha/beta chains family. F-type ATPases have 2 components, CF(1) - the catalytic core - and CF(0) - the membrane proton channel. CF(1) has five subunits: alpha(3), beta(3), gamma(1), delta(1), epsilon(1). CF(0) has three main subunits: a(1), b(2) and c(9-12). The alpha and beta chains form an alternating ring which encloses part of the gamma chain. CF(1) is attached to CF(0) by a central stalk formed by the gamma and epsilon chains, while a peripheral stalk is formed by the delta and b chains.

Its subcellular location is the cell membrane. The catalysed reaction is ATP + H2O + 4 H(+)(in) = ADP + phosphate + 5 H(+)(out). Functionally, produces ATP from ADP in the presence of a proton gradient across the membrane. The alpha chain is a regulatory subunit. The sequence is that of ATP synthase subunit alpha from Rhodococcus jostii (strain RHA1).